Consider the following 317-residue polypeptide: tRNA dimethylallyltransferase (317 aa).

Residue 19–26 (GPTASGKS) coordinates ATP. 21-26 (TASGKS) is a binding site for substrate. An interaction with substrate tRNA region spans residues 44-47 (DSMQ).

Belongs to the IPP transferase family. In terms of assembly, monomer. It depends on Mg(2+) as a cofactor.

The catalysed reaction is adenosine(37) in tRNA + dimethylallyl diphosphate = N(6)-dimethylallyladenosine(37) in tRNA + diphosphate. Functionally, catalyzes the transfer of a dimethylallyl group onto the adenine at position 37 in tRNAs that read codons beginning with uridine, leading to the formation of N6-(dimethylallyl)adenosine (i(6)A). This Methylorubrum populi (strain ATCC BAA-705 / NCIMB 13946 / BJ001) (Methylobacterium populi) protein is tRNA dimethylallyltransferase.